Consider the following 619-residue polypeptide: MPTYRSKTSTAGRNMAGARSLWRATGMKDDDFSKPIIAVVNSFTQFVPGHVHLKDLGQLVAREIEAAGGVAKEFNTIAVDDGIAMGHDGMLYSLPSRDIIADSVEYMVNAHCADAMVCISNCDKITPGMLMAAMRLNIPVIFVSGGPMEAGKTRLANPVTKAIEVKKLDLVDAMVIAVDPSYSDAEVAEVERSACPTCGSCSGMFTANSMNCLTEALGLSLPGNGTVVATHADREQLFKRAGRRIVELTRQHYEQDDERVLPRSVGFKAFENAMTLDIAMGGSTNTILHLLAIAQEAGIDFTMKDIDRLSRVVPQLCKVAPNTNKYHIEDVHRAGGIMAILGELDRAGKLHTDVPTVHTPSLKDALDQWDIVRTQDDAVRTFYQAGPAGVPTQVAFSQNTRWPSLDLDRAEGCIRSYEHAFSKEGGLAVLTGNIALDGCVVKTAGVDESILVFEGTAHVTESQDEAVENILNDKVKAGDVVIVRYEGPKGGPGMQEMLYPTSYIKSKGLGKACALLTDGRFSGGTSGLSIGHCSPEAAAGGAIGLVRDGDKIRIDIPNRTINVLVSDEELARRREEQNAKGWKPAQPRPRKVSAALKAYAKLVMSADKGAVRDLSLLDD.

Mg(2+) is bound at residue Asp-81. Cys-122 serves as a coordination point for [2Fe-2S] cluster. Residues Asp-123 and Lys-124 each coordinate Mg(2+). Residue Lys-124 is modified to N6-carboxylysine. Cys-201 provides a ligand contact to [2Fe-2S] cluster. Glu-496 serves as a coordination point for Mg(2+). Residue Ser-522 is the Proton acceptor of the active site.

Belongs to the IlvD/Edd family. In terms of assembly, homodimer. The cofactor is [2Fe-2S] cluster. Mg(2+) serves as cofactor.

The catalysed reaction is (2R)-2,3-dihydroxy-3-methylbutanoate = 3-methyl-2-oxobutanoate + H2O. The enzyme catalyses (2R,3R)-2,3-dihydroxy-3-methylpentanoate = (S)-3-methyl-2-oxopentanoate + H2O. The protein operates within amino-acid biosynthesis; L-isoleucine biosynthesis; L-isoleucine from 2-oxobutanoate: step 3/4. It participates in amino-acid biosynthesis; L-valine biosynthesis; L-valine from pyruvate: step 3/4. Its function is as follows. Functions in the biosynthesis of branched-chain amino acids. Catalyzes the dehydration of (2R,3R)-2,3-dihydroxy-3-methylpentanoate (2,3-dihydroxy-3-methylvalerate) into 2-oxo-3-methylpentanoate (2-oxo-3-methylvalerate) and of (2R)-2,3-dihydroxy-3-methylbutanoate (2,3-dihydroxyisovalerate) into 2-oxo-3-methylbutanoate (2-oxoisovalerate), the penultimate precursor to L-isoleucine and L-valine, respectively. The protein is Dihydroxy-acid dehydratase 1 of Burkholderia lata (strain ATCC 17760 / DSM 23089 / LMG 22485 / NCIMB 9086 / R18194 / 383).